The following is an 85-amino-acid chain: Large ribosomal subunit protein bL27 (85 aa).

The segment at 1–21 is disordered; that stretch reads MAHKKGQGSTQNNRDSAGRRL.

This sequence belongs to the bacterial ribosomal protein bL27 family.

This Nitratiruptor sp. (strain SB155-2) protein is Large ribosomal subunit protein bL27.